Reading from the N-terminus, the 289-residue chain is Diaminopimelate epimerase (289 aa).

Residues Asn-17, Gln-47, and Asn-67 each contribute to the substrate site. Cys-76 (proton donor) is an active-site residue. Residues 77-78 (GN), Asn-164, Asn-198, and 216-217 (ER) each bind substrate. Cys-225 (proton acceptor) is an active-site residue. 226 to 227 (GS) is a substrate binding site.

It belongs to the diaminopimelate epimerase family. In terms of assembly, homodimer.

The protein resides in the cytoplasm. It carries out the reaction (2S,6S)-2,6-diaminopimelate = meso-2,6-diaminopimelate. The protein operates within amino-acid biosynthesis; L-lysine biosynthesis via DAP pathway; DL-2,6-diaminopimelate from LL-2,6-diaminopimelate: step 1/1. Catalyzes the stereoinversion of LL-2,6-diaminopimelate (L,L-DAP) to meso-diaminopimelate (meso-DAP), a precursor of L-lysine and an essential component of the bacterial peptidoglycan. This is Diaminopimelate epimerase from Bradyrhizobium sp. (strain BTAi1 / ATCC BAA-1182).